We begin with the raw amino-acid sequence, 355 residues long: Probable cinnamyl alcohol dehydrogenase (355 aa).

Cysteine 47 is a binding site for Zn(2+). Serine 49 contacts NADP(+). Zn(2+) is bound by residues histidine 69, glutamate 70, cysteine 100, cysteine 103, cysteine 106, cysteine 114, and cysteine 162. NADP(+) is bound by residues threonine 166, 187-192 (GLGGVG), 210-215 (SSSDKK), threonine 250, glycine 274, and 297-299 (SFI).

The protein belongs to the zinc-containing alcohol dehydrogenase family. In terms of assembly, homodimer. Requires Zn(2+) as cofactor.

It catalyses the reaction (E)-cinnamyl alcohol + NADP(+) = (E)-cinnamaldehyde + NADPH + H(+). The enzyme catalyses (E)-coniferol + NADP(+) = (E)-coniferaldehyde + NADPH + H(+). It carries out the reaction (E)-sinapyl alcohol + NADP(+) = (E)-sinapaldehyde + NADPH + H(+). The catalysed reaction is (E)-4-coumaroyl alcohol + NADP(+) = (E)-4-coumaraldehyde + NADPH + H(+). It catalyses the reaction (E)-caffeyl alcohol + NADP(+) = (E)-caffeyl aldehyde + NADPH + H(+). Its pathway is aromatic compound metabolism; phenylpropanoid biosynthesis. Its function is as follows. Involved in lignin biosynthesis. Catalyzes the final step specific for the production of lignin monomers. Catalyzes the NADPH-dependent reduction of coniferaldehyde, 5-hydroxyconiferaldehyde, sinapaldehyde, 4-coumaraldehyde and caffeyl aldehyde to their respective alcohols. This is Probable cinnamyl alcohol dehydrogenase (CAD1) from Eucalyptus botryoides (Southern mahogany).